Here is a 268-residue protein sequence, read N- to C-terminus: 14-3-3-like protein GF14 upsilon (268 aa).

Phosphoserine occurs at positions 69 and 192. The residue at position 213 (Thr-213) is a Phosphothreonine. Residues 243–268 are disordered; that stretch reads EAGDDIKEAPKEVQKVDEQAQPPPSQ. The span at 246–260 shows a compositional bias: basic and acidic residues; the sequence is DDIKEAPKEVQKVDE. A Phosphoserine modification is found at Ser-267.

This sequence belongs to the 14-3-3 family. Interacts with EDE1. Interacts with DREB1A and DREB1B in the nucleus. Interacts with CINV1.

The protein localises to the cytoplasm. It is found in the nucleus. Is associated with a DNA binding complex that binds to the G box, a well-characterized cis-acting DNA regulatory element found in plant genes. May be involved in cell cycle regulation by binding to soluble EDE1 and sequestering it in an inactive form during the early stages of mitosis. The sequence is that of 14-3-3-like protein GF14 upsilon (GRF5) from Arabidopsis thaliana (Mouse-ear cress).